We begin with the raw amino-acid sequence, 404 residues long: Inosine-5'-monophosphate dehydrogenase (404 aa).

Residues Asp-172 and 222 to 224 contribute to the NAD(+) site; that span reads GIG. Positions 224 and 226 each coordinate K(+). Ser-227 is an IMP binding site. Cys-229 contributes to the K(+) binding site. Cys-229 functions as the Thioimidate intermediate in the catalytic mechanism. IMP contacts are provided by residues 262–264, 285–286, and 309–313; these read DGG, GN, and YVGMG. Arg-325 (proton acceptor) is an active-site residue. Glu-340 is an IMP binding site. K(+) contacts are provided by Glu-394, Ser-395, and His-396.

This sequence belongs to the IMPDH/GMPR family. In terms of assembly, homotetramer. It depends on K(+) as a cofactor.

The enzyme catalyses IMP + NAD(+) + H2O = XMP + NADH + H(+). The protein operates within purine metabolism; XMP biosynthesis via de novo pathway; XMP from IMP: step 1/1. Mycophenolic acid (MPA) is a non-competitive inhibitor that prevents formation of the closed enzyme conformation by binding to the same site as the amobile flap. In contrast, mizoribine monophosphate (MZP) is a competitive inhibitor that induces the closed conformation. MPA is a potent inhibitor of mammalian IMPDHs but a poor inhibitor of the bacterial enzymes. MZP is a more potent inhibitor of bacterial IMPDH. Catalyzes the conversion of inosine 5'-phosphate (IMP) to xanthosine 5'-phosphate (XMP), the first committed and rate-limiting step in the de novo synthesis of guanine nucleotides, and therefore plays an important role in the regulation of cell growth. Essential for mouse infection by tick bite and critical for the survival in environments that appear to lack sufficient amounts of guanine, guanosine, and/or deoxyguanosine to support spirochete growth, such as mammalian host tissues. In Borreliella burgdorferi (strain ATCC 35210 / DSM 4680 / CIP 102532 / B31) (Borrelia burgdorferi), this protein is Inosine-5'-monophosphate dehydrogenase.